A 389-amino-acid polypeptide reads, in one-letter code: Pregnancy-associated glycoprotein 1 (389 aa).

A signal peptide spans 1-15 (MKWLVILGLVALSEC). The 311-residue stretch at 76–386 (YVGNITIGTP…DRGQNRIGLR (311 aa)) folds into the Peptidase A1 domain. Asparagine 79 carries N-linked (GlcNAc...) asparagine glycosylation. The active site involves aspartate 94. A disulfide bond links cysteine 107 and cysteine 112. Asparagine 130 carries N-linked (GlcNAc...) asparagine glycosylation. Cysteine 268 and cysteine 272 form a disulfide bridge. The active site involves aspartate 277. A disulfide bond links cysteine 311 and cysteine 345. Residue asparagine 348 is glycosylated (N-linked (GlcNAc...) asparagine).

It belongs to the peptidase A1 family. As to expression, expressed throughout the chorion, with the signal localized exclusively over the trophectoderm.

The protein resides in the secreted. The protein localises to the extracellular space. In terms of biological role, appears to be proteolytically inactive. The protein is Pregnancy-associated glycoprotein 1 of Sus scrofa (Pig).